Here is a 488-residue protein sequence, read N- to C-terminus: 3-octaprenyl-4-hydroxybenzoate carboxy-lyase (488 aa).

Residue Asn-172 coordinates Mn(2+). Residues 175-177, 189-191, and 194-195 each bind prenylated FMN; these read IYR, RWL, and RG. Glu-238 provides a ligand contact to Mn(2+). Catalysis depends on Asp-287, which acts as the Proton donor.

Belongs to the UbiD family. In terms of assembly, homohexamer. Prenylated FMN serves as cofactor. It depends on Mn(2+) as a cofactor.

The protein resides in the cell membrane. It catalyses the reaction a 4-hydroxy-3-(all-trans-polyprenyl)benzoate + H(+) = a 2-(all-trans-polyprenyl)phenol + CO2. Its pathway is cofactor biosynthesis; ubiquinone biosynthesis. Catalyzes the decarboxylation of 3-octaprenyl-4-hydroxy benzoate to 2-octaprenylphenol, an intermediate step in ubiquinone biosynthesis. In Pseudomonas syringae pv. tomato (strain ATCC BAA-871 / DC3000), this protein is 3-octaprenyl-4-hydroxybenzoate carboxy-lyase.